The chain runs to 181 residues: Adenine phosphoribosyltransferase (181 aa).

Belongs to the purine/pyrimidine phosphoribosyltransferase family. Homodimer.

It localises to the cytoplasm. It catalyses the reaction AMP + diphosphate = 5-phospho-alpha-D-ribose 1-diphosphate + adenine. It functions in the pathway purine metabolism; AMP biosynthesis via salvage pathway; AMP from adenine: step 1/1. Functionally, catalyzes a salvage reaction resulting in the formation of AMP, that is energically less costly than de novo synthesis. The sequence is that of Adenine phosphoribosyltransferase from Methylobacterium sp. (strain 4-46).